The following is a 200-amino-acid chain: 3-isopropylmalate dehydratase small subunit (200 aa).

The protein belongs to the LeuD family. LeuD type 1 subfamily. As to quaternary structure, heterodimer of LeuC and LeuD.

The enzyme catalyses (2R,3S)-3-isopropylmalate = (2S)-2-isopropylmalate. It participates in amino-acid biosynthesis; L-leucine biosynthesis; L-leucine from 3-methyl-2-oxobutanoate: step 2/4. Functionally, catalyzes the isomerization between 2-isopropylmalate and 3-isopropylmalate, via the formation of 2-isopropylmaleate. This chain is 3-isopropylmalate dehydratase small subunit, found in Yersinia pseudotuberculosis serotype O:1b (strain IP 31758).